The chain runs to 99 residues: MSGPNGDPDISAEGIIEDEDEFNEEEYAAIDSMLDQINSCLDDIEERNDALNGKLQELLESNRAARRDFRQQITDHADLPPPANDDDEDEQSRDAQKKD.

The stretch at 34–71 (LDQINSCLDDIEERNDALNGKLQELLESNRAARRDFRQ) forms a coiled coil. Residues 66–78 (RRDFRQQITDHAD) are compositionally biased toward basic and acidic residues. Residues 66-99 (RRDFRQQITDHADLPPPANDDDEDEQSRDAQKKD) form a disordered region.

It belongs to the UPF0184 (EST00098) family.

Its subcellular location is the cell junction. The protein localises to the cytoplasm. It localises to the cytoskeleton. Functionally, essential for intermediate filament organization in intestinal cells, interacts with intermediate filament and regulates intestinal lumen morphology. This is Bublin coiled-coil protein (bbln) from Danio rerio (Zebrafish).